The chain runs to 161 residues: uncharacterized protein (161 aa).

A helical membrane pass occupies residues 5-25; it reads GPTLLSLLAALLVSLGLLLWY.

The protein belongs to the IIV-6 203L/325L family.

It is found in the membrane. This is an uncharacterized protein from Invertebrate iridescent virus 3 (IIV-3).